We begin with the raw amino-acid sequence, 543 residues long: MEKKRTEQRNGVEKKIWEIADKLRGTIDGWDFKSYVLIGLFYRFLSENLCKYFNDSERRNNPDFSYENLTDDYEAIDALKDAAIASKGFFIKPSQLFQNVVKSIRENKNNEDLNTTLRDIFDDIEKSTELGDGRSKESFKGLFKDFNVSEVKLGSTLTIRTEKLKELLTSIDTMELDEFEKNSIDAFGDAYEFLISMYAQNAGKSGGEFFTPQDISELLARIAIGKKDTVDDVYDMACGSGSLLLQVIKVLGKEKTSLVSYYGQEINHTTYNLCRMNMILHNIDYANFNIINADTLTTKEWEKHYVNCSNENGFEVVVSNPPYSISWAGDKKSNLVSDVRFKDAGTLAPNSKADLAFVLHALYVLGQEGTAAIVCFPGILYREGKEQTIRKYLVDQNFVDAVIQLPSNLFSTTSIATSILVLKKNRDKKDPIFFIDGSNEFVREKKNNRLSPKNIEKIVDCFNSKKEEANFAKSVERDKIRESNYDLTVGKYVNSEAEKEELDIKVLNHSIDEIVDKQKDLRTKIKDIIQDIKVDFDNIDINN.

S-adenosyl-L-methionine-binding positions include 208-213 (EFFTPQ), 240-242 (SGS), and glutamate 265.

The protein belongs to the N(4)/N(6)-methyltransferase family. As to quaternary structure, the methyltransferase is composed of M and S polypeptides.

The catalysed reaction is a 2'-deoxyadenosine in DNA + S-adenosyl-L-methionine = an N(6)-methyl-2'-deoxyadenosine in DNA + S-adenosyl-L-homocysteine + H(+). The subtype gamma methyltransferase (M) subunit of a type I restriction enzyme. The M and S subunits together form a methyltransferase (MTase) that probably methylates A-2 on the top strand and A-3 on the bottom strand of the sequence 5'-GAN(7)TAY-3'. As the bacterial DNA is methylated on this sequence and this is the only type I methylase in the genome, it is probably responsible for all of the methylation on this site in the genome. The R subunit has multiple frameshifts and is probably not expressed in this bacteria. The sequence is that of Type I restriction enzyme MpnII methylase subunit from Mycoplasma pneumoniae (strain ATCC 29342 / M129 / Subtype 1) (Mycoplasmoides pneumoniae).